The following is a 652-amino-acid chain: Trypanothione synthetase (652 aa).

The Peptidase C51 domain maps to 34–174 (SNKHDHFFSG…QHKDGVWTII (141 aa)). Residue 328-330 (RFD) coordinates ATP. Mg(2+) is bound by residues Asp330, Glu344, and Asn346. Residues Lys513, Lys548, Gly555, Gln583, and 618–620 (IIT) each bind ATP.

It in the C-terminal section; belongs to the glutathionylspermidine synthase preATP-grasp family. Requires Mg(2+) as cofactor. The N-terminus is blocked.

The catalysed reaction is spermidine + glutathione + ATP = glutathionylspermidine + ADP + phosphate + H(+). The enzyme catalyses glutathionylspermidine + glutathione + ATP = trypanothione + ADP + phosphate + H(+). Its function is as follows. Conjugates glutathione (gamma-Glu-Cys-Gly) and glutathionylspermidine to form trypanothione (N(1),N(8)-bis(glutathionyl)spermidine), which is involved in maintaining intracellular thiol redox and in defense against oxidants. The sequence is that of Trypanothione synthetase (TRS) from Crithidia fasciculata.